Consider the following 494-residue polypeptide: Glycosyl hydrolase family 109 protein (494 aa).

Disordered regions lie at residues 1-35 (MNDAAPQNPGQDEAKGTGEKDNGGSMSPRSALRTT) and 59-86 (EAAQTAVPAAESDESAAPKRQGRTMAGV). The segment at residues 1-55 (MNDAAPQNPGQDEAKGTGEKDNGGSMSPRSALRTTAGVAGAGLGLSALGTGTASA) is a signal peptide (tat-type signal). Over residues 12 to 22 (DEAKGTGEKDN) the composition is skewed to basic and acidic residues. NAD(+)-binding positions include 103–104 (NR), Asp125, 174–177 (WDFH), 194–195 (EC), and Asn223. Residues Tyr252, Arg271, 283–286 (YPNH), and Tyr365 each bind substrate. An NAD(+)-binding site is contributed by Tyr283. The interval 463 to 494 (KANGKPQQIPDFTRGEWKKSRPGTDSEKPSEP) is disordered. Over residues 475–494 (TRGEWKKSRPGTDSEKPSEP) the composition is skewed to basic and acidic residues.

Belongs to the Gfo/Idh/MocA family. Glycosyl hydrolase 109 subfamily. NAD(+) serves as cofactor. Post-translationally, predicted to be exported by the Tat system. The position of the signal peptide cleavage has not been experimentally proven.

In terms of biological role, glycosidase. The polypeptide is Glycosyl hydrolase family 109 protein (Streptomyces niveus (Streptomyces spheroides)).